The sequence spans 167 residues: Signal peptidase complex catalytic subunit SEC11 (167 aa).

At 1–12 the chain is on the cytoplasmic side; it reads MNIRHQLVQFLN. A helical; Signal-anchor for type II membrane protein membrane pass occupies residues 13 to 30; sequence LALVLSSAFMAWKTLSVI. Over 31–167 the chain is Lumenal; it reads TNSHSPIVVV…MGISSLLSNE (137 aa). Residues Ser-44, His-83, and Asp-109 each act as charge relay system in the active site. The interval 153–164 is C-terminal short (CTS) helix; sequence TLLGLMGISSLL.

It belongs to the peptidase S26B family. As to quaternary structure, component of the signal peptidase complex (SPC) composed of a catalytic subunit SEC11 and three accessory subunits SPC1, SPC2 and SPC3. The complex induces a local thinning of the ER membrane which is used to measure the length of the signal peptide (SP) h-region of protein substrates. This ensures the selectivity of the complex towards h-regions shorter than 18-20 amino acids. SPC associates with the translocon complex.

It is found in the endoplasmic reticulum membrane. It catalyses the reaction Cleavage of hydrophobic, N-terminal signal or leader sequences from secreted and periplasmic proteins.. Catalytic component of the signal peptidase complex (SPC) which catalyzes the cleavage of N-terminal signal sequences from nascent proteins as they are translocated into the lumen of the endoplasmic reticulum. Specifically cleaves N-terminal signal peptides that contain a hydrophobic alpha-helix (h-region) shorter than 18-20 amino acids. The chain is Signal peptidase complex catalytic subunit SEC11 (SEC11) from Debaryomyces hansenii (strain ATCC 36239 / CBS 767 / BCRC 21394 / JCM 1990 / NBRC 0083 / IGC 2968) (Yeast).